The primary structure comprises 406 residues: Bifunctional enzyme IspD/IspF (406 aa).

The interval 1-247 (MSLIRVNGEA…ALFFNPAKDT (247 aa)) is 2-C-methyl-D-erythritol 4-phosphate cytidylyltransferase. Residues 248-406 (FIGMGFDTHA…HVSMRYKQKL (159 aa)) are 2-C-methyl-D-erythritol 2,4-cyclodiphosphate synthase. 2 residues coordinate a divalent metal cation: D254 and H256. Residues 254–256 (DTH) and 280–281 (HS) contribute to the 4-CDP-2-C-methyl-D-erythritol 2-phosphate site. H288 lines the a divalent metal cation pocket. Residues 302 to 304 (DIG), 307 to 311 (FPDND), 378 to 381 (TTME), F385, and K388 contribute to the 4-CDP-2-C-methyl-D-erythritol 2-phosphate site.

It in the N-terminal section; belongs to the IspD/TarI cytidylyltransferase family. IspD subfamily. This sequence in the C-terminal section; belongs to the IspF family. It depends on a divalent metal cation as a cofactor.

It carries out the reaction 2-C-methyl-D-erythritol 4-phosphate + CTP + H(+) = 4-CDP-2-C-methyl-D-erythritol + diphosphate. The enzyme catalyses 4-CDP-2-C-methyl-D-erythritol 2-phosphate = 2-C-methyl-D-erythritol 2,4-cyclic diphosphate + CMP. It participates in isoprenoid biosynthesis; isopentenyl diphosphate biosynthesis via DXP pathway; isopentenyl diphosphate from 1-deoxy-D-xylulose 5-phosphate: step 2/6. The protein operates within isoprenoid biosynthesis; isopentenyl diphosphate biosynthesis via DXP pathway; isopentenyl diphosphate from 1-deoxy-D-xylulose 5-phosphate: step 4/6. Its function is as follows. Bifunctional enzyme that catalyzes the formation of 4-diphosphocytidyl-2-C-methyl-D-erythritol from CTP and 2-C-methyl-D-erythritol 4-phosphate (MEP) (IspD), and catalyzes the conversion of 4-diphosphocytidyl-2-C-methyl-D-erythritol 2-phosphate (CDP-ME2P) to 2-C-methyl-D-erythritol 2,4-cyclodiphosphate (ME-CPP) with a corresponding release of cytidine 5-monophosphate (CMP) (IspF). In Helicobacter pylori (strain Shi470), this protein is Bifunctional enzyme IspD/IspF.